The primary structure comprises 406 residues: Cysteine desulfurase (406 aa).

The residue at position 226 (Lys226) is an N6-(pyridoxal phosphate)lysine. The active-site Cysteine persulfide intermediate is Cys364.

The protein belongs to the class-V pyridoxal-phosphate-dependent aminotransferase family. Csd subfamily. As to quaternary structure, homodimer. Interacts with SufE and the SufBCD complex composed of SufB, SufC and SufD. The interaction with SufE is required to mediate the direct transfer of the sulfur atom from the S-sulfanylcysteine. The cofactor is pyridoxal 5'-phosphate.

It localises to the cytoplasm. It catalyses the reaction (sulfur carrier)-H + L-cysteine = (sulfur carrier)-SH + L-alanine. It carries out the reaction L-selenocysteine + AH2 = hydrogenselenide + L-alanine + A + H(+). The protein operates within cofactor biosynthesis; iron-sulfur cluster biosynthesis. Cysteine desulfurases mobilize the sulfur from L-cysteine to yield L-alanine, an essential step in sulfur metabolism for biosynthesis of a variety of sulfur-containing biomolecules. Component of the suf operon, which is activated and required under specific conditions such as oxidative stress and iron limitation. Acts as a potent selenocysteine lyase in vitro, that mobilizes selenium from L-selenocysteine. Selenocysteine lyase activity is however unsure in vivo. The sequence is that of Cysteine desulfurase from Escherichia coli (strain SE11).